A 116-amino-acid polypeptide reads, in one-letter code: Large ribosomal subunit protein bL19 (116 aa).

It belongs to the bacterial ribosomal protein bL19 family.

Functionally, this protein is located at the 30S-50S ribosomal subunit interface and may play a role in the structure and function of the aminoacyl-tRNA binding site. In Mannheimia succiniciproducens (strain KCTC 0769BP / MBEL55E), this protein is Large ribosomal subunit protein bL19.